Reading from the N-terminus, the 223-residue chain is MMIWDWNLSKPSESIKKHSGTWDKGIDYKQTYKMFKEDLQKLKNKELLYEDDYKRIAYLITFLFQLRNGCRIWEAIAGMINIAINIDNLNWNERITVKVRTQKRKDWEFRELIIPKCIKKEDIEMVRDVFLDIKKEIDEKLTMDEKLKAKKKIVKRFGAWLYKNYGINTHSLRYAYVTYLGEHGIPAQVLAKITKHKNINYIETYTQSRLAKEILKNIGDLDD.

One can recognise a Tyr recombinase domain in the interval 29-220; it reads KQTYKMFKED…AKEILKNIGD (192 aa). Catalysis depends on residues R71, K103, H170, R173, and H196. Y205 serves as the catalytic O-(3'-phospho-DNA)-tyrosine intermediate.

The protein belongs to the 'phage' integrase family.

This is an uncharacterized protein from Methanocaldococcus jannaschii (strain ATCC 43067 / DSM 2661 / JAL-1 / JCM 10045 / NBRC 100440) (Methanococcus jannaschii).